We begin with the raw amino-acid sequence, 720 residues long: DNA helicase II (720 aa).

One can recognise a UvrD-like helicase ATP-binding domain in the interval 8-286 (DSLNDKQREA…IRLEQNYRST (279 aa)). ATP is bound by residues 32 to 37 (GSGKTR) and arginine 284. Residues 287–564 (SNILSAANAL…QLMTLHSAKG (278 aa)) form the UvrD-like helicase C-terminal domain.

This sequence belongs to the helicase family. UvrD subfamily.

It carries out the reaction Couples ATP hydrolysis with the unwinding of duplex DNA by translocating in the 3'-5' direction.. It catalyses the reaction ATP + H2O = ADP + phosphate + H(+). A helicase with DNA-dependent ATPase activity. Unwinds DNA duplexes with 3'-5' polarity. Translocates on single-stranded DNA with 3'-5' polarity. Initiates unwinding more efficiently from a nicked substrate than double-stranded DNA. Involved in the post-incision events of nucleotide excision repair and methyl-directed mismatch repair, and probably also in repair of alkylated DNA. This chain is DNA helicase II, found in Escherichia coli (strain K12).